The primary structure comprises 382 residues: Dual-specificity RNA methyltransferase RlmN (382 aa).

Glu-96 functions as the Proton acceptor in the catalytic mechanism. The Radical SAM core domain maps to 102–342 (QGGRGTLCVS…VRTTRGEDID (241 aa)). A disulfide bridge links Cys-109 with Cys-345. Residues Cys-116, Cys-120, and Cys-123 each coordinate [4Fe-4S] cluster. S-adenosyl-L-methionine is bound by residues 170–171 (GE), Ser-202, 224–226 (SLH), and Asn-302. The active-site S-methylcysteine intermediate is the Cys-345.

This sequence belongs to the radical SAM superfamily. RlmN family. Requires [4Fe-4S] cluster as cofactor.

The protein resides in the cytoplasm. It catalyses the reaction adenosine(2503) in 23S rRNA + 2 reduced [2Fe-2S]-[ferredoxin] + 2 S-adenosyl-L-methionine = 2-methyladenosine(2503) in 23S rRNA + 5'-deoxyadenosine + L-methionine + 2 oxidized [2Fe-2S]-[ferredoxin] + S-adenosyl-L-homocysteine. The enzyme catalyses adenosine(37) in tRNA + 2 reduced [2Fe-2S]-[ferredoxin] + 2 S-adenosyl-L-methionine = 2-methyladenosine(37) in tRNA + 5'-deoxyadenosine + L-methionine + 2 oxidized [2Fe-2S]-[ferredoxin] + S-adenosyl-L-homocysteine. In terms of biological role, specifically methylates position 2 of adenine 2503 in 23S rRNA and position 2 of adenine 37 in tRNAs. m2A2503 modification seems to play a crucial role in the proofreading step occurring at the peptidyl transferase center and thus would serve to optimize ribosomal fidelity. The polypeptide is Dual-specificity RNA methyltransferase RlmN (Stutzerimonas stutzeri (strain A1501) (Pseudomonas stutzeri)).